Reading from the N-terminus, the 310-residue chain is Ribosomal RNA small subunit methyltransferase H (310 aa).

S-adenosyl-L-methionine is bound by residues 32-34 (GGH), D52, F79, D100, and Q107.

It belongs to the methyltransferase superfamily. RsmH family.

The protein localises to the cytoplasm. It carries out the reaction cytidine(1402) in 16S rRNA + S-adenosyl-L-methionine = N(4)-methylcytidine(1402) in 16S rRNA + S-adenosyl-L-homocysteine + H(+). Specifically methylates the N4 position of cytidine in position 1402 (C1402) of 16S rRNA. The sequence is that of Ribosomal RNA small subunit methyltransferase H from Geobacillus kaustophilus (strain HTA426).